The sequence spans 217 residues: Redox-sensing transcriptional repressor Rex (217 aa).

A DNA-binding region (H-T-H motif) is located at residues 17-56 (RYLRYVEDLLNHDVLRISSSELSQRMGYTASQVRQDFNNF). Residue 91 to 96 (GVGNLG) participates in NAD(+) binding.

It belongs to the transcriptional regulatory Rex family. In terms of assembly, homodimer.

It is found in the cytoplasm. In terms of biological role, modulates transcription in response to changes in cellular NADH/NAD(+) redox state. The protein is Redox-sensing transcriptional repressor Rex of Caldicellulosiruptor bescii (strain ATCC BAA-1888 / DSM 6725 / KCTC 15123 / Z-1320) (Anaerocellum thermophilum).